We begin with the raw amino-acid sequence, 299 residues long: Ribosomal protein L11 methyltransferase (299 aa).

Residues T152, G172, D194, and N234 each contribute to the S-adenosyl-L-methionine site.

The protein belongs to the methyltransferase superfamily. PrmA family.

The protein localises to the cytoplasm. The catalysed reaction is L-lysyl-[protein] + 3 S-adenosyl-L-methionine = N(6),N(6),N(6)-trimethyl-L-lysyl-[protein] + 3 S-adenosyl-L-homocysteine + 3 H(+). Methylates ribosomal protein L11. This is Ribosomal protein L11 methyltransferase from Geobacter sulfurreducens (strain ATCC 51573 / DSM 12127 / PCA).